A 598-amino-acid chain; its full sequence is UvrABC system protein C (598 aa).

Residues 13 to 92 (SSPGVYLMKD…IKKYQPRYNV (80 aa)) enclose the GIY-YIG domain. In terms of domain architecture, UVR spans 206 to 241 (DTTIANLEEAIKKASQEHKFEHAAALYRTLTLIRQT).

Belongs to the UvrC family. In terms of assembly, interacts with UvrB in an incision complex.

It is found in the cytoplasm. Its function is as follows. The UvrABC repair system catalyzes the recognition and processing of DNA lesions. UvrC both incises the 5' and 3' sides of the lesion. The N-terminal half is responsible for the 3' incision and the C-terminal half is responsible for the 5' incision. This is UvrABC system protein C from Chlamydia muridarum (strain MoPn / Nigg).